We begin with the raw amino-acid sequence, 319 residues long: MIGMILTAIISTTLIMALLVAAGVFTWVERRLLAFVQERLGPNRVGPFGFLQWVADTVKIIAKEDEIPPGADRVAYRLAPAVAATPVLAGFGVVAFGENLALAEIDVGVMFLLGMMGLTAYAVVLGALASPSRFSLIGGLRAAAQMLAYEAFLGLSMLGVVMIAGSLSMSEIVRAQENVWFIVLQPIGAALFTLGGIAAAHRTPFDLPESENDLVGGYITEYTGMSFGLFFLGEYLAILLVSAFAVTLFFGGWLGPWLPGPIWFGLKTGVIAAMFVWIRAALPRPRYDQMVTMAWKVALPLALANVLITGFIVVARSAP.

9 helical membrane passes run 5–25 (ILTAIISTTLIMALLVAAGVF), 78–98 (LAPAVAATPVLAGFGVVAFGE), 109–129 (VMFLLGMMGLTAYAVVLGALA), 147–167 (LAYEAFLGLSMLGVVMIAGSL), 179–199 (VWFIVLQPIGAALFTLGGIAA), 214–234 (LVGGYITEYTGMSFGLFFLGE), 238–258 (ILLVSAFAVTLFFGGWLGPWL), 262–282 (IWFGLKTGVIAAMFVWIRAAL), and 294–314 (AWKVALPLALANVLITGFIVV).

This sequence belongs to the complex I subunit 1 family. NDH-1 is composed of 14 different subunits. Subunits NuoA, H, J, K, L, M, N constitute the membrane sector of the complex.

It localises to the cell inner membrane. The catalysed reaction is a quinone + NADH + 5 H(+)(in) = a quinol + NAD(+) + 4 H(+)(out). NDH-1 shuttles electrons from NADH, via FMN and iron-sulfur (Fe-S) centers, to quinones in the respiratory chain. The immediate electron acceptor for the enzyme in this species is believed to be ubiquinone. Couples the redox reaction to proton translocation (for every two electrons transferred, four hydrogen ions are translocated across the cytoplasmic membrane), and thus conserves the redox energy in a proton gradient. This subunit may bind ubiquinone. This is NADH-quinone oxidoreductase subunit H 1 from Rhodopseudomonas palustris (strain BisA53).